The primary structure comprises 199 residues: Putative pseudouridine methyltransferase (199 aa).

The S-adenosyl-L-methionine site is built by Leu132 and Cys186.

The protein belongs to the methyltransferase superfamily. TrmY family.

It is found in the cytoplasm. This Vibrio campbellii (strain ATCC BAA-1116) protein is Putative pseudouridine methyltransferase.